The primary structure comprises 660 residues: Bifunctional polymyxin resistance protein ArnA (660 aa).

A formyltransferase ArnAFT region spans residues 1–304 (MKTVVFAYHD…TLGLVQGSRL (304 aa)). 86–88 (HLI) is a (6R)-10-formyltetrahydrofolate binding site. Catalysis depends on His-104, which acts as the Proton donor; for formyltransferase activity. (6R)-10-formyltetrahydrofolate contacts are provided by residues Arg-114 and 136 to 140 (VKRAD). The interval 314 to 660 (RRTRVLILGV…RTVDLTDKPL (347 aa)) is dehydrogenase ArnADH. NAD(+)-binding positions include Asp-347 and 368–369 (DI). Residues Ala-393, Tyr-398, and 432–433 (TS) each bind UDP-alpha-D-glucuronate. Glu-434 acts as the Proton acceptor; for decarboxylase activity in catalysis. Residues Arg-460, Asn-492, 526–535 (KLIDGGKQKR), and Tyr-613 contribute to the UDP-alpha-D-glucuronate site. The Proton donor; for decarboxylase activity role is filled by Arg-619.

In the N-terminal section; belongs to the Fmt family. UDP-L-Ara4N formyltransferase subfamily. It in the C-terminal section; belongs to the NAD(P)-dependent epimerase/dehydratase family. UDP-glucuronic acid decarboxylase subfamily. In terms of assembly, homohexamer, formed by a dimer of trimers.

It carries out the reaction UDP-alpha-D-glucuronate + NAD(+) = UDP-beta-L-threo-pentopyranos-4-ulose + CO2 + NADH. The enzyme catalyses UDP-4-amino-4-deoxy-beta-L-arabinose + (6R)-10-formyltetrahydrofolate = UDP-4-deoxy-4-formamido-beta-L-arabinose + (6S)-5,6,7,8-tetrahydrofolate + H(+). It functions in the pathway nucleotide-sugar biosynthesis; UDP-4-deoxy-4-formamido-beta-L-arabinose biosynthesis; UDP-4-deoxy-4-formamido-beta-L-arabinose from UDP-alpha-D-glucuronate: step 1/3. It participates in nucleotide-sugar biosynthesis; UDP-4-deoxy-4-formamido-beta-L-arabinose biosynthesis; UDP-4-deoxy-4-formamido-beta-L-arabinose from UDP-alpha-D-glucuronate: step 3/3. Its pathway is bacterial outer membrane biogenesis; lipopolysaccharide biosynthesis. In terms of biological role, bifunctional enzyme that catalyzes the oxidative decarboxylation of UDP-glucuronic acid (UDP-GlcUA) to UDP-4-keto-arabinose (UDP-Ara4O) and the addition of a formyl group to UDP-4-amino-4-deoxy-L-arabinose (UDP-L-Ara4N) to form UDP-L-4-formamido-arabinose (UDP-L-Ara4FN). The modified arabinose is attached to lipid A and is required for resistance to polymyxin and cationic antimicrobial peptides. This chain is Bifunctional polymyxin resistance protein ArnA, found in Escherichia coli O6:K15:H31 (strain 536 / UPEC).